Reading from the N-terminus, the 194-residue chain is Mediator of RNA polymerase II transcription subunit 8 (194 aa).

This sequence belongs to the Mediator complex subunit 8 family. As to quaternary structure, component of the Mediator complex.

It localises to the nucleus. Functionally, component of the Mediator complex, a coactivator involved in the regulated transcription of nearly all RNA polymerase II-dependent genes. Mediator functions as a bridge to convey information from gene-specific regulatory proteins to the basal RNA polymerase II transcription machinery. Mediator is recruited to promoters by direct interactions with regulatory proteins and serves as a scaffold for the assembly of a functional preinitiation complex with RNA polymerase II and the general transcription factors. In Yarrowia lipolytica (strain CLIB 122 / E 150) (Yeast), this protein is Mediator of RNA polymerase II transcription subunit 8 (MED8).